Here is a 43-residue protein sequence, read N- to C-terminus: ORF7b protein (43 aa).

The helical transmembrane segment at 9–29 threads the bilayer; it reads FYLCFLAFLLFLVLIMLIIFW.

It localises to the host Golgi apparatus membrane. Its subcellular location is the host endosome membrane. In Homo sapiens (Human), this protein is ORF7b protein.